We begin with the raw amino-acid sequence, 268 residues long: 4-hydroxy-tetrahydrodipicolinate reductase (268 aa).

Residues 8–13 (GACGKM), Asp34, 95–97 (GTT), and 121–124 (APNF) each bind NAD(+). His151 acts as the Proton donor/acceptor in catalysis. Residue His152 coordinates (S)-2,3,4,5-tetrahydrodipicolinate. Lys155 acts as the Proton donor in catalysis. 161–162 (GT) is a binding site for (S)-2,3,4,5-tetrahydrodipicolinate.

Belongs to the DapB family.

It is found in the cytoplasm. The catalysed reaction is (S)-2,3,4,5-tetrahydrodipicolinate + NAD(+) + H2O = (2S,4S)-4-hydroxy-2,3,4,5-tetrahydrodipicolinate + NADH + H(+). It carries out the reaction (S)-2,3,4,5-tetrahydrodipicolinate + NADP(+) + H2O = (2S,4S)-4-hydroxy-2,3,4,5-tetrahydrodipicolinate + NADPH + H(+). Its pathway is amino-acid biosynthesis; L-lysine biosynthesis via DAP pathway; (S)-tetrahydrodipicolinate from L-aspartate: step 4/4. Functionally, catalyzes the conversion of 4-hydroxy-tetrahydrodipicolinate (HTPA) to tetrahydrodipicolinate. This chain is 4-hydroxy-tetrahydrodipicolinate reductase, found in Dictyoglomus turgidum (strain DSM 6724 / Z-1310).